We begin with the raw amino-acid sequence, 238 residues long: Pyridoxine 5'-phosphate synthase (238 aa).

Residue N7 participates in 3-amino-2-oxopropyl phosphate binding. 9 to 10 (DH) contributes to the 1-deoxy-D-xylulose 5-phosphate binding site. R18 contributes to the 3-amino-2-oxopropyl phosphate binding site. H43 acts as the Proton acceptor in catalysis. 2 residues coordinate 1-deoxy-D-xylulose 5-phosphate: R45 and H50. E70 serves as the catalytic Proton acceptor. A 1-deoxy-D-xylulose 5-phosphate-binding site is contributed by T100. H190 serves as the catalytic Proton donor. Residues G191 and 212 to 213 (GH) contribute to the 3-amino-2-oxopropyl phosphate site.

It belongs to the PNP synthase family. In terms of assembly, homooctamer; tetramer of dimers.

The protein resides in the cytoplasm. The catalysed reaction is 3-amino-2-oxopropyl phosphate + 1-deoxy-D-xylulose 5-phosphate = pyridoxine 5'-phosphate + phosphate + 2 H2O + H(+). Its pathway is cofactor biosynthesis; pyridoxine 5'-phosphate biosynthesis; pyridoxine 5'-phosphate from D-erythrose 4-phosphate: step 5/5. Catalyzes the complicated ring closure reaction between the two acyclic compounds 1-deoxy-D-xylulose-5-phosphate (DXP) and 3-amino-2-oxopropyl phosphate (1-amino-acetone-3-phosphate or AAP) to form pyridoxine 5'-phosphate (PNP) and inorganic phosphate. In Prochlorococcus marinus (strain MIT 9515), this protein is Pyridoxine 5'-phosphate synthase.